Here is a 95-residue protein sequence, read N- to C-terminus: Small ribosomal subunit protein bS6 (95 aa).

Belongs to the bacterial ribosomal protein bS6 family.

In terms of biological role, binds together with bS18 to 16S ribosomal RNA. In Shouchella clausii (strain KSM-K16) (Alkalihalobacillus clausii), this protein is Small ribosomal subunit protein bS6.